The primary structure comprises 166 residues: uncharacterized protein (166 aa).

3 stretches are compositionally biased toward basic and acidic residues: residues 1 to 13 (MAEV…EHNS), 21 to 112 (KAND…KTKE), and 119 to 137 (DNVE…KEGG). A disordered region spans residues 1–144 (MAEVSKKRCE…EGGSKAWNKT (144 aa)). 8 consecutive repeat copies span residues 31 to 41 (DKTKETAGSAK), 42 to 52 (DKTKETAGSAK), 53 to 63 (DKTKETAESAK), 64 to 74 (DKTKETAGSAK), 75 to 85 (DKTKETAESAK), 86 to 96 (DKTKETAGSAK), 97 to 107 (DKTKETAESAK), and 108 to 118 (DKTKETAGNVR). The tract at residues 31-118 (DKTKETAGSA…KTKETAGNVR (88 aa)) is 8 X 11 AA approximate tandem repeats of D-K-T-K-E-T-A-G/E-S-A-K.

Belongs to the LEA type 1 family.

This is an uncharacterized protein from Encephalitozoon cuniculi (strain GB-M1) (Microsporidian parasite).